The primary structure comprises 166 residues: Urocortin-3 (166 aa).

Residues 1-23 (MLVPAPFLLVLLLLLGAPQVGLS) form the signal peptide. Positions 24–123 (QRSPKAGSSP…QDKAKSDRRT (100 aa)) are excised as a propeptide. Over residues 41 to 51 (REAEKSQRKDT) the composition is skewed to basic and acidic residues. The disordered stretch occupies residues 41–123 (REAEKSQRKD…QDKAKSDRRT (83 aa)). The segment covering 68 to 77 (EDQEGQEEED) has biased composition (acidic residues). The segment covering 86-96 (SVGGGGGGGAG) has biased composition (gly residues). The segment covering 113 to 123 (SQDKAKSDRRT) has biased composition (basic and acidic residues). At I162 the chain carries Isoleucine amide.

It belongs to the sauvagine/corticotropin-releasing factor/urotensin I family. As to quaternary structure, binds with high affinity to CRF receptors 2-alpha and 2-beta.

The protein localises to the secreted. Its function is as follows. Suppresses food intake, delays gastric emptying and decreases heat-induced edema. Might represent an endogenous ligand for maintaining homeostasis after stress. The chain is Urocortin-3 (UCN3) from Bos taurus (Bovine).